A 66-amino-acid polypeptide reads, in one-letter code: U10-theraphotoxin-Cg1a 2 (66 aa).

A signal peptide spans 1 to 21 (MKTSVLFVIFGLALLLCLSFA). Positions 22–29 (AELEDTGR) are excised as a propeptide. 3 cysteine pairs are disulfide-bonded: Cys-31–Cys-46, Cys-38–Cys-51, and Cys-45–Cys-58.

The protein belongs to the neurotoxin 10 (Hwtx-1) family. 29 (Jztx-13) subfamily. As to expression, expressed by the venom gland.

The protein resides in the secreted. Functionally, probable ion channel inhibitor. The sequence is that of U10-theraphotoxin-Cg1a 2 from Chilobrachys guangxiensis (Chinese earth tiger tarantula).